Consider the following 352-residue polypeptide: tRNA (guanine(26)-N(2))-dimethyltransferase (352 aa).

In terms of domain architecture, Trm1 methyltransferase spans 4–350 (ILNKEGAVEF…ANYDEIARIL (347 aa)). S-adenosyl-L-methionine contacts are provided by arginine 39, arginine 65, aspartate 83, aspartate 109, and alanine 110.

It belongs to the class I-like SAM-binding methyltransferase superfamily. Trm1 family.

It carries out the reaction guanosine(26) in tRNA + 2 S-adenosyl-L-methionine = N(2)-dimethylguanosine(26) in tRNA + 2 S-adenosyl-L-homocysteine + 2 H(+). Its function is as follows. Dimethylates a single guanine residue at position 26 of a number of tRNAs using S-adenosyl-L-methionine as donor of the methyl groups. The polypeptide is tRNA (guanine(26)-N(2))-dimethyltransferase (Pyrobaculum islandicum (strain DSM 4184 / JCM 9189 / GEO3)).